Reading from the N-terminus, the 436-residue chain is GTPase Obg (436 aa).

The 159-residue stretch at 1–159 folds into the Obg domain; that stretch reads MAFVDQATIE…LKVKLELRVL (159 aa). One can recognise an OBG-type G domain in the interval 160–335; it reads ADVGLVGFPS…LLLKVADLLD (176 aa). GTP contacts are provided by residues 166–173, 191–195, 213–216, 285–288, and 316–318; these read GFPSAGKS, FTTID, DLPG, TKMD, and SSV. Residues Ser173 and Thr193 each coordinate Mg(2+). One can recognise an OCT domain in the interval 357 to 436; the sequence is KDDHQSTDFQ…GADFAFEFEE (80 aa).

This sequence belongs to the TRAFAC class OBG-HflX-like GTPase superfamily. OBG GTPase family. In terms of assembly, monomer. It depends on Mg(2+) as a cofactor.

It localises to the cytoplasm. In terms of biological role, an essential GTPase which binds GTP, GDP and possibly (p)ppGpp with moderate affinity, with high nucleotide exchange rates and a fairly low GTP hydrolysis rate. Plays a role in control of the cell cycle, stress response, ribosome biogenesis and in those bacteria that undergo differentiation, in morphogenesis control. The chain is GTPase Obg from Oenococcus oeni (strain ATCC BAA-331 / PSU-1).